A 535-amino-acid polypeptide reads, in one-letter code: Probable histone-arginine methyltransferase 1.3 (535 aa).

Met1 carries the post-translational modification N-acetylmethionine. An SAM-dependent MTase PRMT-type domain is found at 141-456 (EASSAKMYFH…QSYTIDLTLS (316 aa)). 5 residues coordinate S-adenosyl-L-methionine: Gln158, Arg167, Gly191, Glu213, and Glu243. Active-site residues include Glu257 and Glu266. S-adenosyl-L-methionine is bound at residue Ser271. The interval 494 to 517 (VAQEPPLQPQPELSTQQDIQTPND) is disordered. A compositionally biased stretch (polar residues) spans 507 to 516 (STQQDIQTPN).

Belongs to the class I-like SAM-binding methyltransferase superfamily. Protein arginine N-methyltransferase family. Interacts with PQT3 in the nucleus. Post-translationally, ubiquitinated by PQT3.

The protein resides in the nucleus. Its subcellular location is the cytoplasm. It carries out the reaction L-arginyl-[protein] + 2 S-adenosyl-L-methionine = N(omega),N(omega)-dimethyl-L-arginyl-[protein] + 2 S-adenosyl-L-homocysteine + 2 H(+). Functionally, methylates (mono- and asymmetric dimethylation) the guanidino nitrogens of arginyl residues in several proteins involved in DNA packaging, transcription regulation, and mRNA stability. Recruited to promoters upon gene activation, methylates histone H3 and activates transcription via chromatin remodeling. Positive regulator in the oxidative stress tolerance that promotes the expression of enzymes preventing oxidative stress such as APX1 and GPX1 by histone methylation (H3R17me2a). Confers tolerance to cadmium CdCl(2) and salt NaCl stresses. The chain is Probable histone-arginine methyltransferase 1.3 (PRMT13) from Arabidopsis thaliana (Mouse-ear cress).